Here is a 204-residue protein sequence, read N- to C-terminus: MPGTLIIITAPSGAGKTTLVSGLLERDPQVNLSVSYTTREPRPGERDGREYHFVDVATFRALRDRGEFLEWAEVHGNYYATSKVWLKQQIATGRDILLEIDWQGAQQVRKSFPDAVGVFILPPSLEELEARLRGRGTDSDDVIMRRLLGARGEMRHVGEFDYVILNNDLQCALDDLVAVVRASRLRYANQHERHLQYFDFLEQD.

The region spanning 3 to 181 (GTLIIITAPS…ALDDLVAVVR (179 aa)) is the Guanylate kinase-like domain. An ATP-binding site is contributed by 10-17 (APSGAGKT).

It belongs to the guanylate kinase family.

Its subcellular location is the cytoplasm. It carries out the reaction GMP + ATP = GDP + ADP. Its function is as follows. Essential for recycling GMP and indirectly, cGMP. This chain is Guanylate kinase, found in Aromatoleum aromaticum (strain DSM 19018 / LMG 30748 / EbN1) (Azoarcus sp. (strain EbN1)).